Here is a 310-residue protein sequence, read N- to C-terminus: ADP-L-glycero-D-manno-heptose-6-epimerase (310 aa).

Residues F10–I11, D31–N32, K38, K53, E75–S79, and N92 each bind NADP(+). The active-site Proton acceptor is the Y140. K144 contacts NADP(+). N169 contacts substrate. Residues V170 and K178 each coordinate NADP(+). Residue K178 is the Proton acceptor of the active site. Substrate is bound by residues S180, H187, F201 to S204, R209, and Y272.

The protein belongs to the NAD(P)-dependent epimerase/dehydratase family. HldD subfamily. As to quaternary structure, homopentamer. It depends on NADP(+) as a cofactor.

It carries out the reaction ADP-D-glycero-beta-D-manno-heptose = ADP-L-glycero-beta-D-manno-heptose. It functions in the pathway nucleotide-sugar biosynthesis; ADP-L-glycero-beta-D-manno-heptose biosynthesis; ADP-L-glycero-beta-D-manno-heptose from D-glycero-beta-D-manno-heptose 7-phosphate: step 4/4. In terms of biological role, catalyzes the interconversion between ADP-D-glycero-beta-D-manno-heptose and ADP-L-glycero-beta-D-manno-heptose via an epimerization at carbon 6 of the heptose. The chain is ADP-L-glycero-D-manno-heptose-6-epimerase from Pectobacterium carotovorum subsp. carotovorum (strain PC1).